The primary structure comprises 207 residues: Small ribosomal subunit protein uS10m (207 aa).

A mitochondrion-targeting transit peptide spans 1–14; that stretch reads MNMFRQAVRSFVRY.

Belongs to the universal ribosomal protein uS10 family. In terms of assembly, part of the mitochondrial small ribosomal subunit.

The protein localises to the mitochondrion. In terms of biological role, involved in mitochondrial genome encoded proteins translation. Involved in the binding of tRNA to the ribosomes. The chain is Small ribosomal subunit protein uS10m (RSM10) from Kluyveromyces lactis (strain ATCC 8585 / CBS 2359 / DSM 70799 / NBRC 1267 / NRRL Y-1140 / WM37) (Yeast).